The following is a 619-amino-acid chain: Zinc finger protein 668 (619 aa).

Met-1 bears the N-acetylmethionine mark. Ser-10 bears the Phosphoserine mark. The segment at 22 to 44 adopts a C2H2-type 1 zinc-finger fold; sequence YKCLFCTKTFPNAPRAARHAATH. The segment at 36–74 is disordered; that stretch reads RAARHAATHTPTDCTEEVREAQPKVDTEPKAEEASGDKV. Over residues 51 to 71 the composition is skewed to basic and acidic residues; it reads EEVREAQPKVDTEPKAEEASG. Residues Lys-59, Lys-65, and Lys-80 each participate in a glycyl lysine isopeptide (Lys-Gly) (interchain with G-Cter in SUMO2) cross-link. 11 C2H2-type zinc fingers span residues 84 to 106, 112 to 134, 140 to 162, 168 to 190, 196 to 218, 224 to 246, 252 to 274, 280 to 302, 308 to 330, 336 to 358, and 364 to 386; these read YACP…GRSH, FPCP…LASH, FRCT…QRGH, YACP…RRTH, YSCE…ERSH, FLCS…QRIH, YRCP…ERTH, FLCP…QRAH, YRCE…RRVH, FKCL…ALVH, and FRCE…SRMH. Lys-154 is covalently cross-linked (Glycyl lysine isopeptide (Lys-Gly) (interchain with G-Cter in SUMO2)). Ser-387 is subject to Phosphoserine. The C2H2-type 13 zinc-finger motif lies at 392–414; that stretch reads FHCNACGKSFVVLSSLRKHERTH. The disordered stretch occupies residues 491–513; that stretch reads VGEAPSTLGDAGEVGGEETDEKP. Lys-512 participates in a covalent cross-link: Glycyl lysine isopeptide (Lys-Gly) (interchain with G-Cter in SUMO2). 3 C2H2-type zinc fingers span residues 516–538, 544–566, and 572–594; these read FVCR…ERSH, FPCT…SRTH, and YSCS…ERTH.

Belongs to the krueppel C2H2-type zinc-finger protein family.

Its subcellular location is the nucleus. In terms of biological role, may be involved in transcriptional regulation. May play a role in DNA repair process. In Mus musculus (Mouse), this protein is Zinc finger protein 668 (Znf668).